A 259-amino-acid chain; its full sequence is MQLWQKQLNLFFIAMGFFTRIPMPKWIEVDADKLNKASRYFGLVGLLVGAISAAVYSLMLYWVSPSVAIVFAMITSVLVTGGFHEDGLADTADGLGGGWTVEAKLNIMKDSRLGSYGALALVLALLLKWQLLTELALFDPSSVSLALIVGHCLSRVVAASFIFSEEYVSDTDTSKSKPLAQQQGINELSILLASGVLALLLVGLVPALVLITGLVIVRYGFIRLFRSQIGGYTGDTLGAAQQGSELSCYLLLLILGVSW.

The next 6 helical transmembrane spans lie at 9–29 (NLFF…WIEV), 43–63 (LVGL…LYWV), 64–84 (SPSV…GGFH), 118–138 (ALAL…LALF), 143–163 (VSLA…SFIF), and 196–216 (VLAL…GLVI).

It belongs to the CobS family. The cofactor is Mg(2+).

The protein resides in the cell inner membrane. The enzyme catalyses alpha-ribazole + adenosylcob(III)inamide-GDP = adenosylcob(III)alamin + GMP + H(+). It carries out the reaction alpha-ribazole 5'-phosphate + adenosylcob(III)inamide-GDP = adenosylcob(III)alamin 5'-phosphate + GMP + H(+). The protein operates within cofactor biosynthesis; adenosylcobalamin biosynthesis; adenosylcobalamin from cob(II)yrinate a,c-diamide: step 7/7. Functionally, joins adenosylcobinamide-GDP and alpha-ribazole to generate adenosylcobalamin (Ado-cobalamin). Also synthesizes adenosylcobalamin 5'-phosphate from adenosylcobinamide-GDP and alpha-ribazole 5'-phosphate. The polypeptide is Adenosylcobinamide-GDP ribazoletransferase (Shewanella halifaxensis (strain HAW-EB4)).